Here is a 215-residue protein sequence, read N- to C-terminus: Peptidyl-tRNA hydrolase (215 aa).

Tyrosine 35 lines the tRNA pocket. Catalysis depends on histidine 40, which acts as the Proton acceptor. 3 residues coordinate tRNA: tyrosine 86, asparagine 88, and asparagine 134.

The protein belongs to the PTH family. As to quaternary structure, monomer.

The protein resides in the cytoplasm. It carries out the reaction an N-acyl-L-alpha-aminoacyl-tRNA + H2O = an N-acyl-L-amino acid + a tRNA + H(+). Functionally, hydrolyzes ribosome-free peptidyl-tRNAs (with 1 or more amino acids incorporated), which drop off the ribosome during protein synthesis, or as a result of ribosome stalling. Catalyzes the release of premature peptidyl moieties from peptidyl-tRNA molecules trapped in stalled 50S ribosomal subunits, and thus maintains levels of free tRNAs and 50S ribosomes. This chain is Peptidyl-tRNA hydrolase, found in Bordetella parapertussis (strain 12822 / ATCC BAA-587 / NCTC 13253).